The following is a 274-amino-acid chain: Dermonecrotic toxin SdSicTox-betaIIB1ai (274 aa).

Residue His5 is part of the active site. Glu25 and Asp27 together coordinate Mg(2+). Residue His41 is the Nucleophile of the active site. Intrachain disulfides connect Cys45/Cys51 and Cys47/Cys190. Asp85 contacts Mg(2+).

This sequence belongs to the arthropod phospholipase D family. Class II subfamily. Mg(2+) is required as a cofactor. Expressed by the venom gland.

It is found in the secreted. The catalysed reaction is an N-(acyl)-sphingosylphosphocholine = an N-(acyl)-sphingosyl-1,3-cyclic phosphate + choline. The enzyme catalyses an N-(acyl)-sphingosylphosphoethanolamine = an N-(acyl)-sphingosyl-1,3-cyclic phosphate + ethanolamine. It carries out the reaction a 1-acyl-sn-glycero-3-phosphocholine = a 1-acyl-sn-glycero-2,3-cyclic phosphate + choline. It catalyses the reaction a 1-acyl-sn-glycero-3-phosphoethanolamine = a 1-acyl-sn-glycero-2,3-cyclic phosphate + ethanolamine. Its function is as follows. Dermonecrotic toxins cleave the phosphodiester linkage between the phosphate and headgroup of certain phospholipids (sphingolipid and lysolipid substrates), forming an alcohol (often choline) and a cyclic phosphate. This toxin acts on sphingomyelin (SM). It may also act on ceramide phosphoethanolamine (CPE), lysophosphatidylcholine (LPC) and lysophosphatidylethanolamine (LPE), but not on lysophosphatidylserine (LPS), and lysophosphatidylglycerol (LPG). It acts by transphosphatidylation, releasing exclusively cyclic phosphate products as second products. Induces dermonecrosis, hemolysis, increased vascular permeability, edema, inflammatory response, and platelet aggregation. This is Dermonecrotic toxin SdSicTox-betaIIB1ai from Sicarius cf. damarensis (strain GJB-2008) (Six-eyed sand spider).